We begin with the raw amino-acid sequence, 1424 residues long: Serine/threonine-protein kinase LMTK3 (1424 aa).

A signal peptide spans 1-20 (MPAPGALILLAAVSASGCLA). The chain crosses the membrane as a helical span at residues 40–60 (AVVLISCSGLLAFIFLLLTCL). The interval 74–95 (NPEGEDCSGEYTPPAEETSSSQ) is disordered. A Protein kinase domain is found at 133-411 (LSYLQEIGSG…SDLQLQLTYL (279 aa)). Residues 139-147 (IGSGWFGKV) and lysine 164 each bind ATP. Residue serine 232 is modified to Phosphoserine. The Proton acceptor role is filled by aspartate 266. Disordered stretches follow at residues 413–465 (SERP…PDDV) and 486–516 (RGAG…PFYE). The segment covering 418-439 (RPPPPPPPPRDGPFPWPWPPSH) has biased composition (pro residues). Arginine 490 is modified (omega-N-methylarginine). The span at 496-507 (PWQPASAPPAPH) shows a compositional bias: pro residues. A phosphoserine mark is found at serine 531 and serine 535. 5 disordered regions span residues 544 to 666 (EHGS…PLPC), 680 to 964 (LERG…MSPE), 976 to 1024 (MSPK…APET), 1041 to 1313 (GLEM…RKRK), and 1325 to 1424 (LFDQ…PVEN). Over residues 571 to 584 (QTPSEVPQLVSETW) the composition is skewed to polar residues. Residues 638–647 (AEEEEEESSP) show a composition bias toward acidic residues. The segment covering 700 to 713 (PPEDDSSLRAERGS) has biased composition (basic and acidic residues). The segment covering 744-758 (RGPPPAPPPPPPPPR) has biased composition (pro residues). The span at 759–791 (ASAEPAASPDPPSALASPGSGLSSPGPKPGDSG) shows a compositional bias: low complexity. Pro residues predominate over residues 818–841 (PRAPPEPPDPGAPRPPPDPGPLPL). A compositionally biased stretch (basic and acidic residues) spans 935-954 (DMKEKVAENGLESPEKEERA). A phosphoserine mark is found at serine 947, serine 962, and serine 977. Basic and acidic residues predominate over residues 994–1004 (RNTERPPEIGP). The span at 1084 to 1094 (GSGGRALGGVG) shows a compositional bias: gly residues. Over residues 1095-1105 (TAPAGGPASAV) the composition is skewed to low complexity. Over residues 1167-1177 (DPLKPERKGPE) the composition is skewed to basic and acidic residues. Residues 1200-1213 (SRLSLALPPLTLTP) are compositionally biased toward low complexity. A compositionally biased stretch (gly residues) spans 1231–1241 (AAGGEAGGAGA). The segment covering 1245 to 1261 (AEEDGEDEDEDEEDEEA) has biased composition (acidic residues). Basic and acidic residues predominate over residues 1262–1272 (AGSRDPGRTRE). Over residues 1329–1339 (ETPTNELSVQG) the composition is skewed to polar residues. Over residues 1348-1360 (STPPAPPTPPHPT) the composition is skewed to pro residues.

It belongs to the protein kinase superfamily. Tyr protein kinase family. In terms of assembly, interacts with ESR1. Interacts with AP-2 complex subunit alpha. Mg(2+) is required as a cofactor. Post-translationally, autophosphorylated. Expressed in brain. Predominantly expressed in cerebral cortex, thalamus, the cerebellum and hippocampal formation (at protein level).

Its subcellular location is the membrane. The protein resides in the cell projection. The protein localises to the axon. It is found in the dendrite. It localises to the golgi apparatus membrane. The enzyme catalyses L-seryl-[protein] + ATP = O-phospho-L-seryl-[protein] + ADP + H(+). It catalyses the reaction L-threonyl-[protein] + ATP = O-phospho-L-threonyl-[protein] + ADP + H(+). Its function is as follows. Protein kinase which phosphorylates ESR1 (in vitro) and protects it against proteasomal degradation. May also regulate ESR1 levels indirectly via a PKC-AKT-FOXO3 pathway where it decreases the activity of PKC and the phosphorylation of AKT, thereby increasing binding of transcriptional activator FOXO3 to the ESR1 promoter and increasing ESR1 transcription. Involved in endocytic trafficking of N-methyl-D-aspartate receptors (NMDAR) in neurons. This Mus musculus (Mouse) protein is Serine/threonine-protein kinase LMTK3 (Lmtk3).